Reading from the N-terminus, the 930-residue chain is Xanthan lyase (930 aa).

An N-terminal signal peptide occupies residues 1–25 (MLSGILIAALLMTLWGGWQPDIAHA). Xanthan is bound by residues 146–148 (NWW), histidine 246, tyrosine 255, arginine 309, 313–315 (RSY), and asparagine 424. Tyrosine 255 serves as the catalytic Proton donor/acceptor. Residues aspartate 515, aspartate 516, and glutamate 517 each coordinate Ca(2+). Arginine 612 provides a ligand contact to xanthan. Glutamate 676 is a binding site for Ca(2+).

The protein belongs to the polysaccharide lyase 8 family. As to quaternary structure, monomer.

The protein resides in the secreted. The enzyme catalyses Eliminative cleavage of the terminal beta-D-mannosyl-(1-&gt;4)-beta-D-glucuronosyl linkage of the side-chain of the polysaccharide xanthan, leaving a 4-deoxy-alpha-L-threo-hex-4-enuronosyl group at the terminus of the side-chain.. Its activity is regulated as follows. Activated by Co(2+) at 1 mM. Completely inhibited by Hg(2+) but not affected by other divalent cations. Intensely inhibited by NaCl and KCl at 150 mM, in particular by the Na(+) and K(+) ions but not the Cl(-) ions. Partially inhibited by iodoacetamide and N-ethylmaleimide at 1 mM but not by dithiothreitol, reduced glutathione or 2-mercaptoethanol. In terms of biological role, plays a role in xanthan depolymerization pathway by cleaving the linkage between the terminal mannosyl and glucuronyl residues of the side chain of xanthan to liberate pyruvylated mannose. Is highly specific for pyruvylated side-chains of xanthan and is not effective with hyaluronate, chondroitin A, gellan, heparin or pectin. This is Xanthan lyase from Bacillus sp. (strain GL1).